Here is a 461-residue protein sequence, read N- to C-terminus: Histone acetyltransferase KAT5 (461 aa).

One can recognise a Tudor-knot domain in the interval 8–65 (IEGCRLPVLRRNQDNEDEWPLAEILSVKDISGRKLFYVHYIDFNKRLDEWVTHERLDL). Lys52 carries the post-translational modification N6-acetyllysine. The disordered stretch occupies residues 70–168 (FPKKEAKTPT…RMTGSLVSDR (99 aa)). 2 positions are modified to phosphoserine: Ser86 and Ser90. Over residues 90–100 (SPEREVKRKVE) the composition is skewed to basic and acidic residues. Residues Lys96, Lys98, Lys135, and Lys137 each carry the N6-acetyllysine; by autocatalysis modification. At Ser147 the chain carries Phosphoserine. The region spanning 175–452 (TRMKNIECIE…IDSKCLHFTP (278 aa)) is the MYST-type HAT domain. The segment at 208-233 (LYLCEFCLKYGRSLKCLQRHLTKCDL) adopts a C2HC MYST-type zinc-finger fold. Lys275 carries the post-translational modification N6-acetyllysine; by autocatalysis. Residues 316-461 (ACILTLPPYQ…PKDWSKRGKW (146 aa)) form an interaction with ATF2 region. Acetyl-CoA is bound by residues 318 to 320 (ILT) and 325 to 331 (QRRGYGK). The active-site Proton donor/acceptor is Glu351. The acetyl-CoA site is built by Ser355 and Ser364. A Glycyl lysine isopeptide (Lys-Gly) (interchain with G-Cter in SUMO1); alternate cross-link involves residue Lys378. Lys378 participates in a covalent cross-link: Glycyl lysine isopeptide (Lys-Gly) (interchain with G-Cter in SUMO2); alternate. Lys399 participates in a covalent cross-link: Glycyl lysine isopeptide (Lys-Gly) (interchain with G-Cter in SUMO1).

Belongs to the MYST (SAS/MOZ) family. Component of the NuA4 histone acetyltransferase complex which contains the catalytic subunit KAT5/TIP60 and the subunits EP400, TRRAP/PAF400, BRD8/SMAP, EPC1, DMAP1/DNMAP1, RUVBL1/TIP49, RUVBL2, ING3, actin, ACTL6A/BAF53A, MORF4L1/MRG15, MORF4L2/MRGX, MRGBP, YEATS4/GAS41, VPS72/YL1 and MEAF6. KAT5/TIP60, EPC1, and ING3 together constitute a minimal HAT complex termed Piccolo NuA4. The NuA4 complex interacts with MYC. Interacts with ATM. Interacts with JADE1. Interacts with PLA2G4A/CPLA2, EDNRA and HDAC7. Interacts with the cytoplasmic tail of APP and APBB1/FE65. Interacts with TRIM24 and TRIM68. Forms a complex with SENP6 and UBE2I in response to UV irradiation. Identified in a complex with HINT1. Interacts with ATF2 and CUL3. Interacts with NR1D2 (via N-terminus). Component of a SWR1-like complex. Interacts with FOXP3. Interacts with ZBTB49. Interacts with SRF. Interacts with ATF3; promoting autoacetylation and deubiquitination by USP7. Interacts with EP300/p300; interaction promotes KAT5 autoacetylation. Interacts with PRKDC; interaction is impaired following KAT5 sumoylation. Interacts with GPR50. In terms of processing, phosphorylated on Ser-86 and Ser-90; enhanced during G2/M phase. The phosphorylated form has a higher activity. Phosphorylation at Ser-90 by CDK1 or CDK9 is a prerequisite for phosphorylation at Ser-86 by GSK3. Phosphorylation at Ser-86 by GSK3 (GSK3A or GSK3B) activates acetyltransferase and acyltransferase activities. Phosphorylation at Ser-90 by CDK9 promotes KAT5 recruitment to chromatin. Phosphorylation by VRK1 following DNA damage promotes KAT5 association with chromatin and histone acetyltransferase activity. Autoacetylated. Autoacetylation is required for histone acetyltransferase activity. Autoacetylation at Lys-275 is facilitated by interaction with EP300/p300: it prevents ubiquitination and subsequent degradation by the proteasome and promotes acetylation of target proteins. Deacetylated by HDAC3 and SIRT1. Deacetylation by HDAC3 promotes its ubiquitination and cytoplasmic localization. Post-translationally, sumoylated by UBE2I at Lys-378 and Lys-399, leading to increase of its histone acetyltransferase activity in UV-induced DNA damage response, as well as its translocation to nuclear bodies. Sumoylation with SUMO2 by PIAS4 at Lys-378 promotes repair of DNA double-strand breaks (DSBs) via homologous recombination (HR). Sumoylation by PIAS4 impairs interaction with PRKDC, inhibiting non-homologous end joining (NHEJ)-mediated repair of DSBs, thereby facilitating HR. Desumoylated by SENP3. In terms of processing, ubiquitinated by MDM2, leading to its proteasome-dependent degradation. Ubiquitination is prevented by autoacetylation at Lys-275. Ubiquitinated following deacetylation by HDAC3, leading to cytoplasmic localization. Deubiquitinated by USP7 following interaction with ATF3, promoting its stabilization.

It localises to the nucleus. The protein resides in the chromosome. Its subcellular location is the cytoplasm. The protein localises to the centromere. It is found in the kinetochore. It localises to the cytoskeleton. The protein resides in the spindle pole. Its subcellular location is the nucleolus. The protein localises to the perinuclear region. The enzyme catalyses L-lysyl-[histone] + acetyl-CoA = N(6)-acetyl-L-lysyl-[histone] + CoA + H(+). The catalysed reaction is L-lysyl-[protein] + acetyl-CoA = N(6)-acetyl-L-lysyl-[protein] + CoA + H(+). It catalyses the reaction (2E)-butenoyl-CoA + L-lysyl-[protein] = N(6)-(2E)-butenoyl-L-lysyl-[protein] + CoA + H(+). It carries out the reaction 2-hydroxyisobutanoyl-CoA + L-lysyl-[protein] = N(6)-(2-hydroxyisobutanoyl)-L-lysyl-[protein] + CoA + H(+). The enzyme catalyses (S)-lactoyl-CoA + L-lysyl-[protein] = N(6)-[(S)-lactoyl]-L-lysyl-[protein] + CoA + H(+). Acyltransferase and acetyltransferase activities are activated by phosphorylation and autoacetylation. Autoacetylation activates the histone acetyltransferase activity. In terms of biological role, catalytic subunit of the NuA4 histone acetyltransferase complex, a multiprotein complex involved in transcriptional activation of select genes principally by acetylation of nucleosomal histones H2A and H4. Histone acetylation alters nucleosome-DNA interactions and promotes interaction of the modified histones with other proteins which positively regulate transcription. The NuA4 histone acetyltransferase complex is required for the activation of transcriptional programs associated with proto-oncogene mediated growth induction, tumor suppressor mediated growth arrest and replicative senescence, apoptosis, and DNA repair. The NuA4 complex plays a direct role in repair of DNA double-strand breaks (DSBs) by promoting homologous recombination (HR): the complex inhibits TP53BP1 binding to chromatin via MBTD1, which recognizes and binds histone H4 trimethylated at 'Lys-20' (H4K20me), and KAT5 that catalyzes acetylation of 'Lys-15' of histone H2A (H2AK15ac), thereby blocking the ubiquitination mark required for TP53BP1 localization at DNA breaks. Also involved in DSB repair by mediating acetylation of 'Lys-5' of histone H2AX (H2AXK5ac), promoting NBN/NBS1 assembly at the sites of DNA damage. The NuA4 complex plays a key role in hematopoietic stem cell maintenance and is required to maintain acetylated H2A.Z/H2AZ1 at MYC target genes. The NuA4 complex is also required for spermatid development by promoting acetylation of histones: histone hyperacetylation is required for histone replacement during the transition from round to elongating spermatids. Component of a SWR1-like complex that specifically mediates the removal of histone H2A.Z/H2AZ1 from the nucleosome. Also acetylates non-histone proteins, such as BMAL1, ATM, AURKB, CHKA, CGAS, ERCC4/XPF, LPIN1, TP53/p53, NDC80/HEC1, NR1D2, RAN, SOX4, FOXP3, SQSTM1, ULK1 and RUBCNL/Pacer. Directly acetylates and activates ATM. Promotes nucleotide excision repair (NER) by mediating acetylation of ERCC4/XPF, thereby promoting formation of the ERCC4-ERCC1 complex. Relieves NR1D2-mediated inhibition of APOC3 expression by acetylating NR1D2. Acts as a regulator of regulatory T-cells (Treg) by catalyzing FOXP3 acetylation, thereby promoting FOXP3 transcriptional repressor activity. Involved in skeletal myoblast differentiation by mediating acetylation of SOX4. Catalyzes acetylation of APBB1/FE65, increasing its transcription activator activity. Promotes transcription elongation during the activation phase of the circadian cycle by catalyzing acetylation of BMAL1, promoting elongation of circadian transcripts. Together with GSK3 (GSK3A or GSK3B), acts as a regulator of autophagy: phosphorylated at Ser-86 by GSK3 under starvation conditions, leading to activate acetyltransferase activity and promote acetylation of key autophagy regulators, such as ULK1 and RUBCNL/Pacer. Acts as a regulator of the cGAS-STING innate antiviral response by catalyzing acetylation the N-terminus of CGAS, thereby promoting CGAS DNA-binding and activation. Also regulates lipid metabolism by mediating acetylation of CHKA or LPIN1. Promotes lipolysis of lipid droplets following glucose deprivation by mediating acetylation of isoform 1 of CHKA, thereby promoting monomerization of CHKA and its conversion into a tyrosine-protein kinase. Acts as a regulator of fatty-acid-induced triacylglycerol synthesis by catalyzing acetylation of LPIN1, thereby promoting the synthesis of diacylglycerol. In addition to protein acetyltransferase, can use different acyl-CoA substrates, such as (2E)-butenoyl-CoA (crotonyl-CoA), S-lactoyl-CoA (lactyl-CoA) and 2-hydroxyisobutanoyl-CoA (2-hydroxyisobutyryl-CoA), and is able to mediate protein crotonylation, lactylation and 2-hydroxyisobutyrylation, respectively. Acts as a key regulator of chromosome segregation and kinetochore-microtubule attachment during mitosis by mediating acetylation or crotonylation of target proteins. Catalyzes acetylation of AURKB at kinetochores, increasing AURKB activity and promoting accurate chromosome segregation in mitosis. Acetylates RAN during mitosis, promoting microtubule assembly at mitotic chromosomes. Acetylates NDC80/HEC1 during mitosis, promoting robust kinetochore-microtubule attachment. Catalyzes crotonylation of MAPRE1/EB1, thereby ensuring accurate spindle positioning in mitosis. Catalyzes lactylation of NBN/NBS1 in response to DNA damage, thereby promoting DNA double-strand breaks (DSBs) via homologous recombination (HR). This is Histone acetyltransferase KAT5 from Pongo abelii (Sumatran orangutan).